Reading from the N-terminus, the 292-residue chain is Probable porphobilinogen deaminase (292 aa).

The residue at position 233 (Cys-233) is an S-(dipyrrolylmethanemethyl)cysteine.

This sequence belongs to the HMBS family. Dipyrromethane is required as a cofactor.

It catalyses the reaction 4 porphobilinogen + H2O = hydroxymethylbilane + 4 NH4(+). It participates in porphyrin-containing compound metabolism; protoporphyrin-IX biosynthesis; coproporphyrinogen-III from 5-aminolevulinate: step 2/4. In terms of biological role, tetrapolymerization of the monopyrrole PBG into the hydroxymethylbilane pre-uroporphyrinogen in several discrete steps. This is Probable porphobilinogen deaminase (hemC) from Methanocaldococcus jannaschii (strain ATCC 43067 / DSM 2661 / JAL-1 / JCM 10045 / NBRC 100440) (Methanococcus jannaschii).